We begin with the raw amino-acid sequence, 156 residues long: Small ribosomal subunit protein uS7 (156 aa).

The protein belongs to the universal ribosomal protein uS7 family. Part of the 30S ribosomal subunit. Contacts proteins S9 and S11.

Its function is as follows. One of the primary rRNA binding proteins, it binds directly to 16S rRNA where it nucleates assembly of the head domain of the 30S subunit. Is located at the subunit interface close to the decoding center, probably blocks exit of the E-site tRNA. The protein is Small ribosomal subunit protein uS7 (rspG) of Streptomyces coelicolor (strain ATCC BAA-471 / A3(2) / M145).